A 61-amino-acid chain; its full sequence is MARKALIEKWNKTPKYSTRAYTRCRICGRPHAVLKKYGICRICFRELAYKGEIPGCKKASW.

Zn(2+) contacts are provided by Cys-24, Cys-27, Cys-40, and Cys-43.

The protein belongs to the universal ribosomal protein uS14 family. Zinc-binding uS14 subfamily. As to quaternary structure, part of the 30S ribosomal subunit. Contacts proteins S3 and S10. Zn(2+) is required as a cofactor.

Functionally, binds 16S rRNA, required for the assembly of 30S particles and may also be responsible for determining the conformation of the 16S rRNA at the A site. In Clostridium botulinum (strain 657 / Type Ba4), this protein is Small ribosomal subunit protein uS14.